Here is a 357-residue protein sequence, read N- to C-terminus: H-2 class I histocompatibility antigen, D-37 alpha chain (357 aa).

The N-terminal stretch at 1 to 20 is a signal peptide; the sequence is MLLFAHLLQLLVSATVPTQS. Residues 21-110 are alpha-1; sequence SPHSLRYFTT…LLGYYNQSND (90 aa). The Extracellular segment spans residues 21 to 304; it reads SPHSLRYFTT…EPPPSTVSNM (284 aa). A glycan (N-linked (GlcNAc...) asparagine) is linked at asparagine 106. Positions 111–202 are alpha-2; it reads ESHTLQWMYG…RLGNETLQRS (92 aa). Cysteine 121 and cysteine 184 form a disulfide bridge. Asparagine 196 carries an N-linked (GlcNAc...) asparagine glycan. Residues 203–294 are alpha-3; the sequence is DPPKAHVTHH…GLPEPLTLRW (92 aa). The Ig-like C1-type domain maps to 205–293; it reads PKAHVTHHPR…EGLPEPLTLR (89 aa). A disulfide bridge connects residues cysteine 223 and cysteine 279. The tract at residues 295-304 is connecting peptide; it reads EPPPSTVSNM. The helical transmembrane segment at 305-327 threads the bilayer; it reads VIIAVLVVLGAVIILGAVVAFVM. At 328–357 the chain is on the cytoplasmic side; sequence KRRRHIGVKGCYAHVLGSKSFQTSDWPQKA. Serine 347 is modified (phosphoserine).

It belongs to the MHC class I family. In terms of assembly, heterodimer of an alpha chain and a beta chain (beta-2-microglobulin).

It is found in the membrane. In terms of biological role, involved in the presentation of foreign antigens to the immune system. The polypeptide is H-2 class I histocompatibility antigen, D-37 alpha chain (H2-T23) (Mus musculus (Mouse)).